The sequence spans 85 residues: U4-theraphotoxin-Hhn1a (85 aa).

An N-terminal signal peptide occupies residues 1–22 (MKMTLIAILTCAAVLVLHTTAA). The propeptide occupies 23-48 (EELEAESQLMEVGMPDTELEAVDEER). 3 disulfide bridges follow: Cys-52-Cys-66, Cys-56-Cys-77, and Cys-71-Cys-82.

Belongs to the neurotoxin 12 (Hwtx-2) family. 02 (Hwtx-2) subfamily. As to quaternary structure, monomer. In terms of tissue distribution, expressed by the venom gland.

It localises to the secreted. Neurotoxin active on both insects and mammals. The polypeptide is U4-theraphotoxin-Hhn1a (Cyriopagopus hainanus (Chinese bird spider)).